Reading from the N-terminus, the 585-residue chain is 1-deoxy-D-xylulose-5-phosphate synthase (585 aa).

Residues His80 and 121–123 (GHS) contribute to the thiamine diphosphate site. Asp152 is a binding site for Mg(2+). Thiamine diphosphate-binding positions include 153-154 (GS), Asn181, Tyr259, and Glu334. Residue Asn181 coordinates Mg(2+).

It belongs to the transketolase family. DXPS subfamily. As to quaternary structure, homodimer. Requires Mg(2+) as cofactor. Thiamine diphosphate is required as a cofactor.

The enzyme catalyses D-glyceraldehyde 3-phosphate + pyruvate + H(+) = 1-deoxy-D-xylulose 5-phosphate + CO2. The protein operates within metabolic intermediate biosynthesis; 1-deoxy-D-xylulose 5-phosphate biosynthesis; 1-deoxy-D-xylulose 5-phosphate from D-glyceraldehyde 3-phosphate and pyruvate: step 1/1. Catalyzes the acyloin condensation reaction between C atoms 2 and 3 of pyruvate and glyceraldehyde 3-phosphate to yield 1-deoxy-D-xylulose-5-phosphate (DXP). The protein is 1-deoxy-D-xylulose-5-phosphate synthase of Buchnera aphidicola subsp. Schizaphis graminum (strain Sg).